Consider the following 166-residue polypeptide: MFPMVTEFMNYGQQTVRAARYIGQGFMITLSHANRLPVTIQYPYEKLITSERFRGRIHFEFDKCIACEVCVRVCPIDLPVVDWKLETDIRKKRLLNYSIDFGICIFCGNCVEYCPTNCLSMTEEYELSTYDRHELNYNQIALGRLPMSIIDDYTIRTILNLPERKT.

4Fe-4S ferredoxin-type domains lie at 55 to 84 (GRIH…VDWK) and 95 to 124 (LNYS…MTEE). [4Fe-4S] cluster is bound by residues Cys64, Cys67, Cys70, Cys74, Cys104, Cys107, Cys110, and Cys114.

This sequence belongs to the complex I 23 kDa subunit family. As to quaternary structure, NDH is composed of at least 16 different subunits, 5 of which are encoded in the nucleus. The cofactor is [4Fe-4S] cluster.

It localises to the plastid. The protein localises to the chloroplast thylakoid membrane. It carries out the reaction a plastoquinone + NADH + (n+1) H(+)(in) = a plastoquinol + NAD(+) + n H(+)(out). It catalyses the reaction a plastoquinone + NADPH + (n+1) H(+)(in) = a plastoquinol + NADP(+) + n H(+)(out). In terms of biological role, NDH shuttles electrons from NAD(P)H:plastoquinone, via FMN and iron-sulfur (Fe-S) centers, to quinones in the photosynthetic chain and possibly in a chloroplast respiratory chain. The immediate electron acceptor for the enzyme in this species is believed to be plastoquinone. Couples the redox reaction to proton translocation, and thus conserves the redox energy in a proton gradient. The protein is NAD(P)H-quinone oxidoreductase subunit I, chloroplastic of Encelia californica (Bush sunflower).